The primary structure comprises 626 residues: Basic helix-loop-helix ARNT-like protein 1 (626 aa).

A disordered region spans residues 1–60 (MADQRMDISSTISDFMSPGATDLLSSPLGTSGMDCNRKRKGSSTDYQESMDTDKDDPHGR). The residue at position 17 (S17) is a Phosphoserine; by GSK3-beta. Phosphothreonine; by GSK3-beta is present on T21. The Nuclear localization signal signature appears at 36–41 (NRKRKG). Residues 51–60 (DTDKDDPHGR) show a composition bias toward basic and acidic residues. Positions 72 to 125 (NAREAHSQIEKRRRDKMNSFIDELASLVPTCNAMSRKLDKLTVLRMAVQHMKTL) constitute a bHLH domain. S78 bears the Phosphoserine mark. S90 carries the phosphoserine; by CK2 modification. Positions 142–152 (LSDDELKHLIL) match the Nuclear export signal 1 motif. One can recognise a PAS 1 domain in the interval 143-215 (SDDELKHLIL…EQLSSSDTAP (73 aa)). K252 participates in a covalent cross-link: Glycyl lysine isopeptide (Lys-Gly) (interchain with G-Cter in SUMO2 and SUMO3). K259 participates in a covalent cross-link: Glycyl lysine isopeptide (Lys-Gly) (interchain with G-Cter in SUMO); alternate. K259 is covalently cross-linked (Glycyl lysine isopeptide (Lys-Gly) (interchain with G-Cter in SUMO2); alternate). The 71-residue stretch at 326–396 (PQPVNGEIRV…ECHRQVLQTR (71 aa)) folds into the PAS 2 domain. The short motif at 361–369 (LAYLPQELL) is the Nuclear export signal 2 element. The PAC domain maps to 401 to 444 (TNCYKFKIKDGSFITLRSRWFSFMNPWTKEVEYIVSTNTVVLAN). Disordered regions lie at residues 457 to 493 (TASP…AGAG) and 510 to 597 (RGSS…SNDE). Residues 484 to 493 (IPGGTRAGAG) show a composition bias toward gly residues. An interaction with CIART region spans residues 508–588 (RIRGSSPSSC…IGIDMIDNDQ (81 aa)). Residues 511-521 (GSSPSSCGSSP) are compositionally biased toward low complexity. At K538 the chain carries N6-acetyllysine.

As to quaternary structure, component of the circadian clock oscillator which includes the CRY1/2 proteins, CLOCK or NPAS2, BMAL1 or BMAL2, CSNK1D and/or CSNK1E, TIMELESS and the PER1/2/3 proteins. Forms a heterodimer with CLOCK. The CLOCK-BMAL1 heterodimer is required for E-box-dependent transactivation, for CLOCK nuclear translocation and degradation, and, for phosphorylation of both CLOCK and BMAL1. Part of a nuclear complex which also includes RACK1 and PRKCA; RACK1 and PRKCA are recruited to the complex in a circadian manner. Interacts with NPAS2. Interacts with EZH2. Interacts with SUMO3. Interacts with SIRT1. Interacts with AHR. Interacts with ID1, ID2 and ID3. Interacts with DDX4. Interacts with OGT. Interacts with EED and SUZ12. Interacts with MTA1. Interacts with CIART. Interacts with HSP90. Interacts with KAT2B and EP300. Interacts with BHLHE40/DEC1 and BHLHE41/DEC2. Interacts with RELB and the interaction is enhanced in the presence of CLOCK. Interacts with PER1, PER2, CRY1 and CRY2 and this interaction requires a translocation to the nucleus. Interaction of the CLOCK-BMAL1 heterodimer with PER or CRY inhibits transcription activation. Interaction of the CLOCK-BMAL1 with CRY1 is independent of DNA but with PER2 is off DNA. The CLOCK-BMAL1 heterodimer interacts with GSK3B. Interacts with KDM5A. Interacts with KMT2A; in a circadian manner. Interacts with UBE3A. Interacts with PRKCG. Interacts with MAGEL2. Interacts with NCOA2. Interacts with THRAP3. The CLOCK-BMAL1 heterodimer interacts with PASD1. Interacts with PASD1. Interacts with USP9X. Interacts with PIWIL2 (via PIWI domain). Interacts with HDAC3. Interacts with HNF4A. Ubiquitinated, leading to its proteasomal degradation. Deubiquitinated by USP9X. Post-translationally, O-glycosylated; contains O-GlcNAc. O-glycosylation by OGT prevents protein degradation by inhibiting ubiquitination. It also stabilizes the CLOCK-BMAL1 heterodimer thereby increasing CLOCK-BMAL1-mediated transcription of genes in the negative loop of the circadian clock such as PER1/2/3 and CRY1/2. In terms of processing, acetylated on Lys-538 by CLOCK during the repression phase of the circadian cycle. Acetylation facilitates recruitment of CRY1 protein and initiates the repression phase of the circadian cycle. Acetylated at Lys-538 by KAT5 during the activation phase of the cycle, leading to recruitment of the positive transcription elongation factor b (P-TEFb) and BRD4, followed by productive elongation of circadian transcripts. Deacetylated by SIRT1, which may result in decreased protein stability. Phosphorylated upon dimerization with CLOCK. Phosphorylation enhances the transcriptional activity, alters the subcellular localization and decreases the stability of the CLOCK-BMAL1 heterodimer by promoting its degradation. Phosphorylation shows circadian variations in the liver with a peak between CT10 to CT14. Phosphorylation at Ser-90 by CK2 is essential for its nuclear localization, its interaction with CLOCK and controls CLOCK nuclear entry. Dephosphorylation at Ser-78 is important for dimerization with CLOCK and transcriptional activity. Post-translationally, sumoylated on Lys-259 upon dimerization with CLOCK. Predominantly conjugated to poly-SUMO2/3 rather than SUMO1 and the level of these conjugates undergo rhythmic variation, peaking at CT9-CT12. Sumoylation localizes it exclusively to the PML body and promotes its ubiquitination in the PML body, ubiquitin-dependent proteasomal degradation and the transcriptional activity of the CLOCK-BMAL1 heterodimer. In terms of processing, undergoes lysosome-mediated degradation in a time-dependent manner in the liver.

Its subcellular location is the nucleus. The protein resides in the cytoplasm. It is found in the PML body. Transcriptional activator which forms a core component of the circadian clock. The circadian clock, an internal time-keeping system, regulates various physiological processes through the generation of approximately 24 hour circadian rhythms in gene expression, which are translated into rhythms in metabolism and behavior. It is derived from the Latin roots 'circa' (about) and 'diem' (day) and acts as an important regulator of a wide array of physiological functions including metabolism, sleep, body temperature, blood pressure, endocrine, immune, cardiovascular, and renal function. Consists of two major components: the central clock, residing in the suprachiasmatic nucleus (SCN) of the brain, and the peripheral clocks that are present in nearly every tissue and organ system. Both the central and peripheral clocks can be reset by environmental cues, also known as Zeitgebers (German for 'timegivers'). The predominant Zeitgeber for the central clock is light, which is sensed by retina and signals directly to the SCN. The central clock entrains the peripheral clocks through neuronal and hormonal signals, body temperature and feeding-related cues, aligning all clocks with the external light/dark cycle. Circadian rhythms allow an organism to achieve temporal homeostasis with its environment at the molecular level by regulating gene expression to create a peak of protein expression once every 24 hours to control when a particular physiological process is most active with respect to the solar day. Transcription and translation of core clock components (CLOCK, NPAS2, BMAL1, BMAL2, PER1, PER2, PER3, CRY1 and CRY2) plays a critical role in rhythm generation, whereas delays imposed by post-translational modifications (PTMs) are important for determining the period (tau) of the rhythms (tau refers to the period of a rhythm and is the length, in time, of one complete cycle). A diurnal rhythm is synchronized with the day/night cycle, while the ultradian and infradian rhythms have a period shorter and longer than 24 hours, respectively. Disruptions in the circadian rhythms contribute to the pathology of cardiovascular diseases, cancer, metabolic syndromes and aging. A transcription/translation feedback loop (TTFL) forms the core of the molecular circadian clock mechanism. Transcription factors, CLOCK or NPAS2 and BMAL1 or BMAL2, form the positive limb of the feedback loop, act in the form of a heterodimer and activate the transcription of core clock genes and clock-controlled genes (involved in key metabolic processes), harboring E-box elements (5'-CACGTG-3') within their promoters. The core clock genes: PER1/2/3 and CRY1/2 which are transcriptional repressors form the negative limb of the feedback loop and interact with the CLOCK|NPAS2-BMAL1|BMAL2 heterodimer inhibiting its activity and thereby negatively regulating their own expression. This heterodimer also activates nuclear receptors NR1D1, NR1D2, RORA, RORB and RORG, which form a second feedback loop and which activate and repress BMAL1 transcription, respectively. BMAL1 positively regulates myogenesis and negatively regulates adipogenesis via the transcriptional control of the genes of the canonical Wnt signaling pathway. Plays a role in normal pancreatic beta-cell function; regulates glucose-stimulated insulin secretion via the regulation of antioxidant genes NFE2L2/NRF2 and its targets SESN2, PRDX3, CCLC and CCLM. Negatively regulates the mTORC1 signaling pathway; regulates the expression of MTOR and DEPTOR. Controls diurnal oscillations of Ly6C inflammatory monocytes; rhythmic recruitment of the PRC2 complex imparts diurnal variation to chemokine expression that is necessary to sustain Ly6C monocyte rhythms. Regulates the expression of HSD3B2, STAR, PTGS2, CYP11A1, CYP19A1 and LHCGR in the ovary and also the genes involved in hair growth. Plays an important role in adult hippocampal neurogenesis by regulating the timely entry of neural stem/progenitor cells (NSPCs) into the cell cycle and the number of cell divisions that take place prior to cell-cycle exit. Regulates the circadian expression of CIART. The CLOCK-BMAL1 heterodimer regulates the circadian expression of SERPINE1/PAI1, VWF, B3, CCRN4L/NOC, NAMPT, DBP, MYOD1, PPARGC1A, PPARGC1B, SIRT1, GYS2, F7, NGFR, GNRHR, BHLHE40/DEC1, ATF4, MTA1 and also genes implicated in glucose and lipid metabolism. Promotes rhythmic chromatin opening, regulating the DNA accessibility of other transcription factors. The NPAS2-BMAL1 heterodimer positively regulates the expression of MAOA, F7 and LDHA and modulates the circadian rhythm of daytime contrast sensitivity by regulating the rhythmic expression of adenylate cyclase type 1 (ADCY1) in the retina. The preferred binding motif for the CLOCK-BMAL1 heterodimer is 5'-CACGTGA-3', which contains a flanking adenine nucleotide at the 3-prime end of the canonical 6-nucleotide E-box sequence. CLOCK specifically binds to the half-site 5'-CAC-3', while BMAL1 binds to the half-site 5'-GTGA-3'. The CLOCK-BMAL1 heterodimer also recognizes the non-canonical E-box motifs 5'-AACGTGA-3' and 5'-CATGTGA-3'. Essential for the rhythmic interaction of CLOCK with ASS1 and plays a critical role in positively regulating CLOCK-mediated acetylation of ASS1. Plays a role in protecting against lethal sepsis by limiting the expression of immune checkpoint protein CD274 in macrophages in a PKM2-dependent manner. Regulates the diurnal rhythms of skeletal muscle metabolism via transcriptional activation of genes promoting triglyceride synthesis (DGAT2) and metabolic efficiency (COQ10B). The sequence is that of Basic helix-loop-helix ARNT-like protein 1 (BMAL1) from Equus caballus (Horse).